The following is a 596-amino-acid chain: Arrestin domain-containing protein C31A2.12 (596 aa).

A helical transmembrane segment spans residues 194–211; the sequence is AYAIGSYIPIHFVLVPLL. 2 disordered regions span residues 363 to 387 and 405 to 446; these read NLDT…TYAS and QQQP…VITR. A phosphothreonine mark is found at T373 and T374. Composition is skewed to polar residues over residues 405-420 and 430-446; these read QQQP…SPSN and SLGS…VITR. 4 positions are modified to phosphoserine: S452, S474, S493, and S497. A disordered region spans residues 493-596; that stretch reads SRPPSPGIVT…MLPSGFSRRN (104 aa). T502 and T507 each carry phosphothreonine. Residues 504–522 show a composition bias toward polar residues; that stretch reads PQRTSPSFFVSPTESTRQS. S514 bears the Phosphoserine mark. The span at 531–555 shows a compositional bias: low complexity; sequence HSTSSSSGISPSHSSASLAHLSQAS.

Belongs to the arrestin family.

It is found in the membrane. The protein is Arrestin domain-containing protein C31A2.12 of Schizosaccharomyces pombe (strain 972 / ATCC 24843) (Fission yeast).